The primary structure comprises 514 residues: Endogenous retrovirus group PABLB member 1 Env polyprotein (514 aa).

N-linked (GlcNAc...) asparagine glycosylation occurs at Asn58. The segment at 60–316 (STSNVFLQWA…YPYLPHVVNQ (257 aa)) is surface protein. Positions 82–85 (CWVC) match the CXXC motif. 6 N-linked (GlcNAc...) asparagine glycosylation sites follow: Asn133, Asn140, Asn155, Asn218, Asn226, and Asn267. The segment at 317–514 (GTRAIVHRND…QRDIFHSNAP (198 aa)) is transmembrane protein. Positions 328–348 (LPTIFMPSVGLGTVIQHIEAL) are fusion peptide. N-linked (GlcNAc...) asparagine glycans are attached at residues Asn350 and Asn357. Positions 378–394 (LQNRMALDILTAAEGGT) match the CKS-17 motif. Cys395 and Cys402 are oxidised to a cystine. Positions 395–403 (CALIKTECC) match the CX6CC motif. N-linked (GlcNAc...) asparagine glycans are attached at residues Asn408 and Asn412. A helical membrane pass occupies residues 452 to 472 (ILIVLATLWSVGIALCCGLYF).

This sequence belongs to the gamma type-C retroviral envelope protein family. HERV class-I R(b) env subfamily. In terms of processing, the CXXC motif is highly conserved across a broad range of retroviral envelope proteins. It is thought to participate in the formation of a labile disulfide bond possibly with the CX6CC motif present in the transmembrane domain. Low expression in placenta and testis.

The protein localises to the cell membrane. In terms of biological role, retroviral envelope proteins mediate receptor recognition and membrane fusion during early infection. Endogenous envelope proteins may have kept, lost or modified their original function during evolution. This endogenous envelope protein has lost its original fusogenic properties. The protein is Endogenous retrovirus group PABLB member 1 Env polyprotein (ERVPABLB-1) of Homo sapiens (Human).